The sequence spans 235 residues: MKLPMIDQLEKLTGHYFKDKKKLKKALTHSSVQGSEQGNYERLEFLGDRVLGLLIAEMLYQLFPQASEGELSVRLNSLVNAQTCADIALEMELPVMIHVGFEMKNLKGRRLTNMYADVIEALIAVIYLDGGLESVRPFIQRYWQSRAKQMDAGRRDAKTQLQEWAHVQGGVQPHYRVVKRSGPDHDPVFMVEVSIPGFASEIGQGNSKRCAERMAAEKILRREGIWETMEKNNHE.

In terms of domain architecture, RNase III spans 6–131; sequence IDQLEKLTGH…LIAVIYLDGG (126 aa). Residue Glu44 participates in Mg(2+) binding. Residue Asp48 is part of the active site. Positions 117 and 120 each coordinate Mg(2+). The active site involves Glu120. The DRBM domain maps to 156 to 225; the sequence is DAKTQLQEWA…AEKILRREGI (70 aa).

This sequence belongs to the ribonuclease III family. As to quaternary structure, homodimer. It depends on Mg(2+) as a cofactor.

Its subcellular location is the cytoplasm. It carries out the reaction Endonucleolytic cleavage to 5'-phosphomonoester.. Digests double-stranded RNA. Involved in the processing of primary rRNA transcript to yield the immediate precursors to the large and small rRNAs (23S and 16S). Processes some mRNAs, and tRNAs when they are encoded in the rRNA operon. Processes pre-crRNA and tracrRNA of type II CRISPR loci if present in the organism. This Bartonella henselae (strain ATCC 49882 / DSM 28221 / CCUG 30454 / Houston 1) (Rochalimaea henselae) protein is Ribonuclease 3.